The following is a 161-amino-acid chain: Cell division protein SepF 2 (161 aa).

Residues 19–47 (EDSEKAPELSSSRETKTKNQNQSKSLLRS) form a disordered region. A compositionally biased stretch (basic and acidic residues) spans 21–35 (SEKAPELSSSRETKT).

Belongs to the SepF family. Homodimer. Interacts with FtsZ.

It localises to the cytoplasm. Cell division protein that is part of the divisome complex and is recruited early to the Z-ring. Probably stimulates Z-ring formation, perhaps through the cross-linking of FtsZ protofilaments. Its function overlaps with FtsA. This is Cell division protein SepF 2 from Desulforamulus reducens (strain ATCC BAA-1160 / DSM 100696 / MI-1) (Desulfotomaculum reducens).